The primary structure comprises 149 residues: Pleckstrin homology domain-containing family J member 1 (149 aa).

The PH domain maps to 15–108 (PAEMAAELGM…WMAALRQASY (94 aa)).

In Bos taurus (Bovine), this protein is Pleckstrin homology domain-containing family J member 1 (PLEKHJ1).